Here is a 1475-residue protein sequence, read N- to C-terminus: Sex-determining transformer protein 2 (1475 aa).

An N-terminal signal peptide occupies residues 1–31; sequence MKLKYNKLLVSVVIVTFVTFGLLLAECFGKS. The next 11 helical transmembrane spans lie at 446-466, 474-494, 496-516, 589-609, 737-757, 902-922, 928-948, 952-972, 979-999, 1034-1054, and 1060-1080; these read TIHF…IFVW, AFMF…VCST, GVIV…LANL, WGCT…FIDS, GVIL…LLFI, AVGV…LFAF, AGIF…TPTI, FLFS…VHLF, IYTN…FCAL, IAQF…ICSI, and IFFV…FNSI. Positions 1133 to 1273 are interaction with fem-3; that stretch reads EFSIKRSSPP…RERNLMNKRS (141 aa). Disordered regions lie at residues 1142 to 1194 and 1267 to 1330; these read PCRY…GDNT and NLMN…VDEP. Basic residues predominate over residues 1178–1188; sequence RSPKTGNKRVR. The segment covering 1276 to 1310 has biased composition (basic and acidic residues); that stretch reads QRRESRNIEKMKKSQENLDKEKSEEKISESKKNQD. An MX regulatory domain; required for tra-1 binding region spans residues 1392–1413; the sequence is CEDIYWTHRTGQLPPGLQVPRR. The interval 1424 to 1475 is disordered; it reads TPPPEDLNWVPPAESPPIPIPQQAFDLLEERRRNHREQQDEAREGDLSDPEV. The span at 1451 to 1469 shows a compositional bias: basic and acidic residues; the sequence is LEERRRNHREQQDEAREGD.

In terms of assembly, interacts with tra-1 and fem-3. Post-translationally, undergoes cleavage by tra-3 to produce a feminizing carboxy-terminal isoform Tra-2B. Somatic and germline tissues. Isoform Tra-2B is specific to oocytes.

It localises to the membrane. Functionally, plays a major role in controlling sexual cell fates. Promotes female development in XX animals where it sequesters one or more of the FEM proteins to the membrane thereby freeing the tra-1 protein (a putative transcription factor) to enter the nucleus and promote female development. In XO animals it acts as a receptor for her-1 which prevents it from binding to FEM proteins thereby repressing the activity of tra-1. Negatively regulates male development when bound to fem-3 and is required together with tra-1 for promoting spermatogenesis. Also required for feminizing tra-3 activity. The protein is Sex-determining transformer protein 2 (tra-2) of Caenorhabditis elegans.